The primary structure comprises 221 residues: Vesicle transport v-SNARE 13 (221 aa).

The Cytoplasmic segment spans residues 1-198 (MSQGFERYER…MTRRMNRNKW (198 aa)). A coiled-coil region spans residues 32 to 93 (EQKKQNLSEI…FKTEVKRITS (62 aa)). The helical; Anchor for type IV membrane protein transmembrane segment at 199–219 (TIGAIITVLVLAIIFILYFKL) threads the bilayer. Topologically, residues 220-221 (TR) are vesicular.

This sequence belongs to the VTI1 family. As to quaternary structure, forms SNARE complexes with t-SNAREs. Expressed at low levels in roots, stems, flowers and leaves.

It localises to the vacuole membrane. The protein localises to the prevacuolar compartment membrane. The protein resides in the endosome membrane. It is found in the early endosome membrane. Its function is as follows. May function as a v-SNARE responsible for targeting vesicles involved in the secretory pathway. Involved in actin-dependent endosomal trafficking pathways associated with the vacuole within root hairs and root tip epidermal cells. Essential for cell wall organization and polarized root hair growth. Also required for the localization of SYP41 to the trans-Golgi network in root hair cells. In Arabidopsis thaliana (Mouse-ear cress), this protein is Vesicle transport v-SNARE 13.